We begin with the raw amino-acid sequence, 281 residues long: Sorbose reductase SOU1 (281 aa).

Residues Ile47, Lys74, and Asn119 each contribute to the NADP(+) site. Catalysis depends on proton donor residues Ser173 and Tyr188. Positions 188, 192, 221, and 223 each coordinate NADP(+). Residue Lys192 is the Lowers pKa of active site Tyr of the active site.

The protein belongs to the short-chain dehydrogenases/reductases (SDR) family. In terms of assembly, homotetramer.

It carries out the reaction D-sorbitol + NADP(+) = keto-L-sorbose + NADPH + H(+). Its pathway is carbohydrate degradation; L-sorbose degradation. Catalyzes the NADP dependent reduction of L-sorbose to D-glucitol. Can also convert fructose to mannitol, but less efficiently. The chain is Sorbose reductase SOU1 (SOU1) from Candida albicans (strain SC5314 / ATCC MYA-2876) (Yeast).